The primary structure comprises 247 residues: tRNA (guanine-N(1)-)-methyltransferase (247 aa).

S-adenosyl-L-methionine contacts are provided by residues glycine 117 and 136–141 (LGDFVL).

Belongs to the RNA methyltransferase TrmD family. In terms of assembly, homodimer.

Its subcellular location is the cytoplasm. It catalyses the reaction guanosine(37) in tRNA + S-adenosyl-L-methionine = N(1)-methylguanosine(37) in tRNA + S-adenosyl-L-homocysteine + H(+). Specifically methylates guanosine-37 in various tRNAs. This Myxococcus xanthus (strain DK1622) protein is tRNA (guanine-N(1)-)-methyltransferase.